The sequence spans 284 residues: L-ribulose-5-phosphate 3-epimerase UlaE (284 aa).

This sequence belongs to the L-ribulose-5-phosphate 3-epimerase family.

The catalysed reaction is L-ribulose 5-phosphate = L-xylulose 5-phosphate. The protein operates within cofactor degradation; L-ascorbate degradation; D-xylulose 5-phosphate from L-ascorbate: step 3/4. In terms of biological role, catalyzes the isomerization of L-xylulose-5-phosphate to L-ribulose-5-phosphate. Is involved in the anaerobic L-ascorbate utilization. This chain is L-ribulose-5-phosphate 3-epimerase UlaE, found in Shigella sonnei (strain Ss046).